The primary structure comprises 273 residues: Hydroxyethylthiazole kinase (273 aa).

Met-41 is a substrate binding site. The ATP site is built by Arg-117 and Thr-170. Position 197 (Gly-197) interacts with substrate.

Belongs to the Thz kinase family. The cofactor is Mg(2+).

The enzyme catalyses 5-(2-hydroxyethyl)-4-methylthiazole + ATP = 4-methyl-5-(2-phosphooxyethyl)-thiazole + ADP + H(+). The protein operates within cofactor biosynthesis; thiamine diphosphate biosynthesis; 4-methyl-5-(2-phosphoethyl)-thiazole from 5-(2-hydroxyethyl)-4-methylthiazole: step 1/1. Its function is as follows. Catalyzes the phosphorylation of the hydroxyl group of 4-methyl-5-beta-hydroxyethylthiazole (THZ). The protein is Hydroxyethylthiazole kinase of Clostridium acetobutylicum (strain ATCC 824 / DSM 792 / JCM 1419 / IAM 19013 / LMG 5710 / NBRC 13948 / NRRL B-527 / VKM B-1787 / 2291 / W).